The chain runs to 300 residues: UDP-N-acetylenolpyruvoylglucosamine reductase (300 aa).

The FAD-binding PCMH-type domain maps to 27 to 192; the sequence is KVGGPADYLA…ISAKFALKPG (166 aa). Arginine 171 is an active-site residue. Serine 221 serves as the catalytic Proton donor. Glutamate 291 is a catalytic residue.

Belongs to the MurB family. FAD is required as a cofactor.

The protein resides in the cytoplasm. The enzyme catalyses UDP-N-acetyl-alpha-D-muramate + NADP(+) = UDP-N-acetyl-3-O-(1-carboxyvinyl)-alpha-D-glucosamine + NADPH + H(+). It participates in cell wall biogenesis; peptidoglycan biosynthesis. Its function is as follows. Cell wall formation. In Streptococcus agalactiae serotype Ia (strain ATCC 27591 / A909 / CDC SS700), this protein is UDP-N-acetylenolpyruvoylglucosamine reductase.